Here is a 416-residue protein sequence, read N- to C-terminus: UDP-N-acetylglucosamine 1-carboxyvinyltransferase (416 aa).

22–23 (KN) is a binding site for phosphoenolpyruvate. Arg-92 lines the UDP-N-acetyl-alpha-D-glucosamine pocket. Cys-116 acts as the Proton donor in catalysis. Cys-116 carries the post-translational modification 2-(S-cysteinyl)pyruvic acid O-phosphothioketal. UDP-N-acetyl-alpha-D-glucosamine contacts are provided by residues 121-125 (RPVDQ), Asp-304, and Ile-326.

This sequence belongs to the EPSP synthase family. MurA subfamily.

The protein resides in the cytoplasm. The enzyme catalyses phosphoenolpyruvate + UDP-N-acetyl-alpha-D-glucosamine = UDP-N-acetyl-3-O-(1-carboxyvinyl)-alpha-D-glucosamine + phosphate. It functions in the pathway cell wall biogenesis; peptidoglycan biosynthesis. Functionally, cell wall formation. Adds enolpyruvyl to UDP-N-acetylglucosamine. In Cupriavidus pinatubonensis (strain JMP 134 / LMG 1197) (Cupriavidus necator (strain JMP 134)), this protein is UDP-N-acetylglucosamine 1-carboxyvinyltransferase.